The sequence spans 463 residues: Glutamate--tRNA ligase 1 (463 aa).

Residues 10–20 (PSPTGYLHIGG) carry the 'HIGH' region motif. The 'KMSKS' region signature appears at 238 to 242 (KLSKR). Position 241 (Lys-241) interacts with ATP.

The protein belongs to the class-I aminoacyl-tRNA synthetase family. Glutamate--tRNA ligase type 1 subfamily. As to quaternary structure, monomer.

The protein localises to the cytoplasm. The catalysed reaction is tRNA(Glu) + L-glutamate + ATP = L-glutamyl-tRNA(Glu) + AMP + diphosphate. Functionally, catalyzes the attachment of glutamate to tRNA(Glu) in a two-step reaction: glutamate is first activated by ATP to form Glu-AMP and then transferred to the acceptor end of tRNA(Glu). The protein is Glutamate--tRNA ligase 1 of Helicobacter pylori (strain P12).